Reading from the N-terminus, the 205-residue chain is Small ribosomal subunit protein uS4 (205 aa).

The segment at 18–46 is disordered; the sequence is NIWGRPKSPVNRREYGPGQHGQRRKGKLS. Residues 94–157 form the S4 RNA-binding domain; sequence RRLDTVVYRA…KQLTFVLEAN (64 aa).

The protein belongs to the universal ribosomal protein uS4 family. As to quaternary structure, part of the 30S ribosomal subunit. Contacts protein S5. The interaction surface between S4 and S5 is involved in control of translational fidelity.

In terms of biological role, one of the primary rRNA binding proteins, it binds directly to 16S rRNA where it nucleates assembly of the body of the 30S subunit. Its function is as follows. With S5 and S12 plays an important role in translational accuracy. The protein is Small ribosomal subunit protein uS4 of Rhodopseudomonas palustris (strain BisB18).